The primary structure comprises 475 residues: Amino acid permease 8 (475 aa).

Positions 1–22 are disordered; sequence MDAYNNPSAVESGDAAVKSVDD. Residues 1–31 are Cytoplasmic-facing; the sequence is MDAYNNPSAVESGDAAVKSVDDDGREKRTGT. 2 helical membrane passes run 32–52 and 53–73; these read FWTA…LSLA and WAIA…FAII. Residues 74-120 lie on the Cytoplasmic side of the membrane; the sequence is TYYTSTLLADCYRSPDSITGTRNYNYMGVVRSYLGGKKVQLCGVAQY. The chain crosses the membrane as a helical span at residues 121 to 141; that stretch reads VNLVGVTIGYTITASISLVAI. Topologically, residues 142 to 157 are extracellular; sequence GKSNCYHDKGHKAKCS. A helical transmembrane segment spans residues 158 to 178; sequence VSNYPYMAAFGIVQIILSQLP. Residues 179–185 are Cytoplasmic-facing; sequence NFHKLSF. The chain crosses the membrane as a helical span at residues 186 to 206; the sequence is LSIIAAVMSFSYASIGIGLAI. Topologically, residues 207–236 are extracellular; the sequence is ATVASGKIGKTELTGTVIGVDVTASEKVWK. A helical membrane pass occupies residues 237–257; that stretch reads LFQAIGDIAFSYAFTTILIEI. Topologically, residues 258-276 are cytoplasmic; the sequence is QDTLRSSPPENKVMKRASL. Residues 277–297 traverse the membrane as a helical segment; it reads VGVSTTTVFYILCGCIGYAAF. At 298–314 the chain is on the extracellular side; that stretch reads GNQAPGDFLTDFGFYEP. A helical transmembrane segment spans residues 315-335; the sequence is YWLIDFANACIALHLIGAYQV. Topologically, residues 336 to 378 are cytoplasmic; that stretch reads YAQPFFQFVEENCNKKWPQSNFINKEYSSKVPLLGKCRVNLFR. The helical transmembrane segment at 379–398 threads the bilayer; it reads LVWRTCYVVLTTFVAMIFPF. Topologically, residues 399–401 are extracellular; sequence FNA. A helical membrane pass occupies residues 402–424; that stretch reads ILGLLGAFAFWPLTVYFPVAMHI. The Cytoplasmic segment spans residues 425-441; sequence AQAKVKKYSRRWLALNL. Residues 442-462 form a helical membrane-spanning segment; the sequence is LVLVCLIVSALAAVGSIIGLI. At 463 to 475 the chain is on the extracellular side; it reads NSVKSYKPFKNLD.

This sequence belongs to the amino acid/polyamine transporter 2 family. Amino acid/auxin permease (AAAP) (TC 2.A.18.2) subfamily. As to expression, expressed in flower buds, siliques, developing seeds and funiculi.

Its subcellular location is the cell membrane. Its function is as follows. Amino acid-proton symporter. Stereospecific transporter with a broad specificity for glutamate, aspartate and neutral and acidic amino acids. The protein is Amino acid permease 8 (AAP8) of Arabidopsis thaliana (Mouse-ear cress).